The primary structure comprises 565 residues: CTP synthase (565 aa).

Residues 1-272 (MARPKNVKHI…DLRVMKKLGL (272 aa)) form an amidoligase domain region. Ser-18 contributes to the CTP binding site. Ser-18 is a binding site for UTP. Position 19–24 (19–24 (SLGKGI)) interacts with ATP. Residue Tyr-59 participates in L-glutamine binding. Asp-76 is an ATP binding site. Residues Asp-76 and Glu-146 each coordinate Mg(2+). CTP contacts are provided by residues 153-155 (DIE), 193-198 (KTKPTQ), and Lys-229. UTP contacts are provided by residues 193–198 (KTKPTQ) and Lys-229. The region spanning 299–543 (TIGVCGKYTE…VAAAKEYEKG (245 aa)) is the Glutamine amidotransferase type-1 domain. L-glutamine is bound at residue Gly-363. Cys-390 serves as the catalytic Nucleophile; for glutamine hydrolysis. L-glutamine contacts are provided by residues 391–394 (LGMQ), Glu-414, and Arg-471. Residues His-516 and Glu-518 contribute to the active site.

This sequence belongs to the CTP synthase family. Homotetramer.

It carries out the reaction UTP + L-glutamine + ATP + H2O = CTP + L-glutamate + ADP + phosphate + 2 H(+). The enzyme catalyses L-glutamine + H2O = L-glutamate + NH4(+). It catalyses the reaction UTP + NH4(+) + ATP = CTP + ADP + phosphate + 2 H(+). It participates in pyrimidine metabolism; CTP biosynthesis via de novo pathway; CTP from UDP: step 2/2. With respect to regulation, allosterically activated by GTP, when glutamine is the substrate; GTP has no effect on the reaction when ammonia is the substrate. The allosteric effector GTP functions by stabilizing the protein conformation that binds the tetrahedral intermediate(s) formed during glutamine hydrolysis. Inhibited by the product CTP, via allosteric rather than competitive inhibition. Catalyzes the ATP-dependent amination of UTP to CTP with either L-glutamine or ammonia as the source of nitrogen. Regulates intracellular CTP levels through interactions with the four ribonucleotide triphosphates. The polypeptide is CTP synthase (Chlorobium phaeobacteroides (strain DSM 266 / SMG 266 / 2430)).